The chain runs to 407 residues: Aurora kinase (407 aa).

2 disordered regions span residues 1–43 (MTPT…STSS) and 66–137 (ERQG…TQSK). 2 stretches are compositionally biased toward low complexity: residues 31–43 (SAST…STSS) and 126–136 (STTTTMTSTQS). A Protein kinase domain is found at 147–399 (FDIGRPLGKG…LEGVIAHAWI (253 aa)). ATP is bound by residues Lys157, Lys176, and 224–227 (LEYA). The active-site Proton acceptor is the Asp272. Asp290 contributes to the ATP binding site.

It belongs to the protein kinase superfamily. Ser/Thr protein kinase family.

It localises to the cytoplasm. Its subcellular location is the cytoskeleton. The protein localises to the spindle. It is found in the midbody. The protein resides in the microtubule organizing center. It localises to the centrosome. Its subcellular location is the nucleus. The protein localises to the chromosome. It is found in the centromere. It carries out the reaction L-seryl-[protein] + ATP = O-phospho-L-seryl-[protein] + ADP + H(+). The catalysed reaction is L-threonyl-[protein] + ATP = O-phospho-L-threonyl-[protein] + ADP + H(+). Its activity is regulated as follows. Cdc2 activity is required for activation. Serine/threonine protein kinase that contributes to the regulation of cell cycle progression. Involved in meiotic apparatus formation and polar body extrusion. Contributes to Plk1 activation and phosphorylation of histone H3 at 'Ser-10' during meiosis I. Required for accurate progression of early embryonic M phase. Involved in chromosome alignment and cleavage furrow formation during early embryonic cycles. May be involved in mitotic spindle formation and cytokinesis. The sequence is that of Aurora kinase from Patiria pectinifera (Starfish).